Consider the following 898-residue polypeptide: Sodium/hydrogen exchanger 5 (898 aa).

The Cytoplasmic portion of the chain corresponds to 1–3 (MLR). A helical membrane pass occupies residues 4-24 (VALLLLPGLPLAGVGATEEPT). The Extracellular portion of the chain corresponds to 25 to 47 (QEPGPLGEPPGLALFRWQWHEVE). Residues 48–68 (APYLVALWILVASLAKIVFHL) traverse the membrane as a helical segment. Residues 69–75 (SRKVTSL) are Cytoplasmic-facing. Residues 76–96 (VPESCLLILLGLALGGIVLAV) traverse the membrane as a helical segment. Residues 97-136 (AKKAEYQLEPGTFFLFLLPPIVLDSGYFMPSRLFFDNLGA) lie on the Extracellular side of the membrane. Residues 137 to 157 (ILTYAVVGTLWNAFTTGVALW) traverse the membrane as a helical segment. Residues 158–175 (GLQQAGLVAPRVQAGLLD) lie on the Cytoplasmic side of the membrane. The chain crosses the membrane as a helical span at residues 176–196 (FLLFGSLISAVDPVAVLAVFE). The Extracellular portion of the chain corresponds to 197-202 (EVHVNE). The N-linked (GlcNAc...) asparagine glycan is linked to Asn201. The chain crosses the membrane as a helical span at residues 203–223 (TLFIIVFGESLLNDAVTVVLY). Over 224-248 (KVCNSFVEMGSANVQATDYLKGVAS) the chain is Cytoplasmic. Residues 249–269 (LFVVSLGGAAVGLVFAFLLAL) traverse the membrane as a helical segment. Residues 270 to 278 (TTRFTKRVR) are Extracellular-facing. A helical transmembrane segment spans residues 279-299 (IIEPLLVFLLAYAAYLTAEMA). The Cytoplasmic segment spans residues 300–333 (SLSAILAVTMCGLGCKKYVEANISHKSRTAVKYT). A helical membrane pass occupies residues 334–354 (MKTLASSAETVIFMLLGISAV). The Extracellular portion of the chain corresponds to 355-362 (DSSKWAWD). The chain crosses the membrane as a helical span at residues 363–383 (SGLVLGTLFFILFFRALGVVL). The Cytoplasmic segment spans residues 384–400 (QTWVLNQFRLVPLDKID). Residues 401–421 (QVVMSYGGLRGAVAFALVILL) form a helical membrane-spanning segment. At 422 to 430 (DRTKVPAKD) the chain is on the extracellular side. A helical transmembrane segment spans residues 431-451 (YFVATTIVVVFFTVIVQGLTI). Residues 452–898 (KPLVKWLRVK…CIQFNRGGRL (447 aa)) lie on the Cytoplasmic side of the membrane. 2 disordered regions span residues 660–692 (TKSKPRPRKTGHKKKDGVANPEATNGKPPRDLG) and 801–888 (ESLA…NSHW). The span at 662-674 (SKPRPRKTGHKKK) shows a compositional bias: basic residues. The segment covering 856–867 (ESSADIPQQQEL) has biased composition (polar residues).

This sequence belongs to the monovalent cation:proton antiporter 1 (CPA1) transporter (TC 2.A.36) family. In terms of assembly, interacts with CHP1 and CHP2. Interacts with ARRB2; facilitates the endocytosis of SLC9A5 from the plasma membrane. Interacts with RACK1; this interaction positively regulates SLC9A5 activity and promotes SLC9A5 localization to focal adhesions. Interacts with SCAMP2; this interaction regulates SLC9A5 cell-surface targeting and SLC9A5 activity. Post-translationally, phosphorylated by PRKAA2; promotes its accumulation at the cell surface. Phosphorylated by CSNK2A1 in a manner favoring its beta-arrestin binding and endocytosis. Highly expressed in brain. Strongly expressed in the dentate gyrus.

The protein resides in the cell membrane. Its subcellular location is the recycling endosome membrane. It localises to the cell projection. It is found in the dendritic spine membrane. The protein localises to the synaptic cell membrane. The protein resides in the cell junction. Its subcellular location is the focal adhesion. The catalysed reaction is Na(+)(in) + H(+)(out) = Na(+)(out) + H(+)(in). Its function is as follows. Plasma membrane Na(+)/H(+) antiporter. Mediates the electroneutral exchange of intracellular H(+) ions for extracellular Na(+) in 1:1 stoichiometry. Responsible for regulating intracellular pH homeostasis, in particular in neural tissues. Acts as a negative regulator of dendritic spine growth. Plays a role in postsynaptic remodeling and signaling. Can also contribute to organellar pH regulation, with consequences for receptor tyrosine kinase trafficking. The sequence is that of Sodium/hydrogen exchanger 5 (Slc9a5) from Rattus norvegicus (Rat).